Consider the following 548-residue polypeptide: WAP, Kazal, immunoglobulin, Kunitz and NTR domain-containing protein 1 (548 aa).

Residues 1–19 (MPALRPLLPLLLLLRLTSG) form the signal peptide. The 54-residue stretch at 26-79 (LGSHPGVCPNQLSPNLWVDAQSTCERECSRDQDCAAAEKCCINVCGLHSCVAAR) folds into the WAP domain. Disulfide bonds link cysteine 33–cysteine 66, cysteine 49–cysteine 70, cysteine 53–cysteine 65, cysteine 59–cysteine 75, cysteine 116–cysteine 146, cysteine 120–cysteine 139, and cysteine 128–cysteine 157. In terms of domain architecture, Kazal-like spans 108 to 159 (WDGQPVCRCRDRCEKEPSFTCASDGLTYYNRCYMDAEACLRGLHLHIVPCKH). The tract at residues 164 to 184 (PPSSPGPPETTARPTPGAAPV) is disordered. Residues 186-279 (PALYSSPSPQ…GLLRADFPLS (94 aa)) form the Ig-like C2-type domain. 10 disulfides stabilise this stretch: cysteine 207/cysteine 263, cysteine 299/cysteine 351, cysteine 306/cysteine 334, cysteine 326/cysteine 347, cysteine 359/cysteine 409, cysteine 368/cysteine 392, cysteine 384/cysteine 405, cysteine 417/cysteine 489, cysteine 420/cysteine 491, and cysteine 431/cysteine 540. 2 consecutive BPTI/Kunitz inhibitor domains span residues 299 to 351 (CLPD…QQAC) and 359 to 409 (CVLP…EDAC). An NTR domain is found at 409–540 (CPVPRTPPCR…ILELLEKQAC (132 aa)). Asparagine 493 carries N-linked (GlcNAc...) asparagine glycosylation.

The protein belongs to the WFIKKN family. As to expression, expressed in pancreas, kidney, liver, placenta, and lung.

Its subcellular location is the secreted. In terms of biological role, protease-inhibitor that contains multiple distinct protease inhibitor domains. Probably has serine protease- and metalloprotease-inhibitor activity. This Homo sapiens (Human) protein is WAP, Kazal, immunoglobulin, Kunitz and NTR domain-containing protein 1 (WFIKKN1).